A 67-amino-acid polypeptide reads, in one-letter code: Large ribosomal subunit protein bL31c (67 aa).

It belongs to the bacterial ribosomal protein bL31 family. Type A subfamily. In terms of assembly, part of the 50S ribosomal subunit.

It localises to the plastid. It is found in the chloroplast. In terms of biological role, binds the 23S rRNA. The polypeptide is Large ribosomal subunit protein bL31c (rpl31) (Cyanidioschyzon merolae (strain NIES-3377 / 10D) (Unicellular red alga)).